Reading from the N-terminus, the 157-residue chain is 2-C-methyl-D-erythritol 2,4-cyclodiphosphate synthase (157 aa).

The a divalent metal cation site is built by Asp8 and His10. Residues 8–10 (DVH) and 34–35 (HS) each bind 4-CDP-2-C-methyl-D-erythritol 2-phosphate. His42 contributes to the a divalent metal cation binding site. 4-CDP-2-C-methyl-D-erythritol 2-phosphate contacts are provided by residues 56–58 (DIG), 61–65 (FPDTD), 100–106 (AQKPKMA), 132–135 (TTTE), and Phe139.

This sequence belongs to the IspF family. As to quaternary structure, homotrimer. Requires a divalent metal cation as cofactor.

The enzyme catalyses 4-CDP-2-C-methyl-D-erythritol 2-phosphate = 2-C-methyl-D-erythritol 2,4-cyclic diphosphate + CMP. It functions in the pathway isoprenoid biosynthesis; isopentenyl diphosphate biosynthesis via DXP pathway; isopentenyl diphosphate from 1-deoxy-D-xylulose 5-phosphate: step 4/6. Functionally, involved in the biosynthesis of isopentenyl diphosphate (IPP) and dimethylallyl diphosphate (DMAPP), two major building blocks of isoprenoid compounds. Catalyzes the conversion of 4-diphosphocytidyl-2-C-methyl-D-erythritol 2-phosphate (CDP-ME2P) to 2-C-methyl-D-erythritol 2,4-cyclodiphosphate (ME-CPP) with a corresponding release of cytidine 5-monophosphate (CMP). The sequence is that of 2-C-methyl-D-erythritol 2,4-cyclodiphosphate synthase from Alkaliphilus oremlandii (strain OhILAs) (Clostridium oremlandii (strain OhILAs)).